Here is a 327-residue protein sequence, read N- to C-terminus: Phenylalanine--tRNA ligase alpha subunit (327 aa).

Mg(2+) is bound at residue Glu252.

The protein belongs to the class-II aminoacyl-tRNA synthetase family. Phe-tRNA synthetase alpha subunit type 1 subfamily. In terms of assembly, tetramer of two alpha and two beta subunits. Requires Mg(2+) as cofactor.

The protein localises to the cytoplasm. It carries out the reaction tRNA(Phe) + L-phenylalanine + ATP = L-phenylalanyl-tRNA(Phe) + AMP + diphosphate + H(+). In Shewanella sediminis (strain HAW-EB3), this protein is Phenylalanine--tRNA ligase alpha subunit.